We begin with the raw amino-acid sequence, 118 residues long: Protein YoeF (118 aa).

This chain is Protein YoeF (yoeF), found in Escherichia coli (strain K12).